An 81-amino-acid chain; its full sequence is High-potential iron-sulfur protein (81 aa).

[4Fe-4S] cluster is bound by residues cysteine 43, cysteine 46, cysteine 59, and cysteine 73.

The protein belongs to the high-potential iron-sulfur protein (HiPIP) family. Homodimer.

In terms of biological role, specific class of high-redox-potential 4Fe-4S ferredoxins. Functions in anaerobic electron transport in most purple and in some other photosynthetic bacteria and in at least one genus (Paracoccus) of halophilic, denitrifying bacteria. The polypeptide is High-potential iron-sulfur protein (hip) (Thiococcus pfennigii (Thiocapsa pfennigii)).